The sequence spans 388 residues: Succinate--CoA ligase [ADP-forming] subunit beta (388 aa).

The region spanning 9 to 244 (KQLFARYGLP…HSQEDEREAH (236 aa)) is the ATP-grasp domain. Residues Lys-46, 53 to 55 (GRG), Glu-99, Thr-102, and Glu-107 contribute to the ATP site. Residues Asn-199 and Asp-213 each coordinate Mg(2+). Residues Asn-264 and 321-323 (GIV) contribute to the substrate site.

This sequence belongs to the succinate/malate CoA ligase beta subunit family. In terms of assembly, heterotetramer of two alpha and two beta subunits. Mg(2+) serves as cofactor.

It catalyses the reaction succinate + ATP + CoA = succinyl-CoA + ADP + phosphate. The enzyme catalyses GTP + succinate + CoA = succinyl-CoA + GDP + phosphate. The protein operates within carbohydrate metabolism; tricarboxylic acid cycle; succinate from succinyl-CoA (ligase route): step 1/1. In terms of biological role, succinyl-CoA synthetase functions in the citric acid cycle (TCA), coupling the hydrolysis of succinyl-CoA to the synthesis of either ATP or GTP and thus represents the only step of substrate-level phosphorylation in the TCA. The beta subunit provides nucleotide specificity of the enzyme and binds the substrate succinate, while the binding sites for coenzyme A and phosphate are found in the alpha subunit. In Sodalis glossinidius (strain morsitans), this protein is Succinate--CoA ligase [ADP-forming] subunit beta.